The chain runs to 202 residues: ATP-dependent Clp protease proteolytic subunit (202 aa).

Serine 101 serves as the catalytic Nucleophile. The active site involves histidine 126.

The protein belongs to the peptidase S14 family. Component of the chloroplastic Clp protease core complex.

It localises to the plastid. It is found in the chloroplast stroma. The enzyme catalyses Hydrolysis of proteins to small peptides in the presence of ATP and magnesium. alpha-casein is the usual test substrate. In the absence of ATP, only oligopeptides shorter than five residues are hydrolyzed (such as succinyl-Leu-Tyr-|-NHMec, and Leu-Tyr-Leu-|-Tyr-Trp, in which cleavage of the -Tyr-|-Leu- and -Tyr-|-Trp bonds also occurs).. Cleaves peptides in various proteins in a process that requires ATP hydrolysis. Has a chymotrypsin-like activity. Plays a major role in the degradation of misfolded proteins. The protein is ATP-dependent Clp protease proteolytic subunit of Liriodendron tulipifera (Tuliptree).